The chain runs to 156 residues: Deoxyuridine 5'-triphosphate nucleotidohydrolase (156 aa).

Substrate-binding positions include 76 to 78, Asn-89, 93 to 95, and Lys-103; these read RSG and TVD.

It belongs to the dUTPase family. The cofactor is Mg(2+).

It carries out the reaction dUTP + H2O = dUMP + diphosphate + H(+). The protein operates within pyrimidine metabolism; dUMP biosynthesis; dUMP from dCTP (dUTP route): step 2/2. In terms of biological role, this enzyme is involved in nucleotide metabolism: it produces dUMP, the immediate precursor of thymidine nucleotides and it decreases the intracellular concentration of dUTP so that uracil cannot be incorporated into DNA. The polypeptide is Deoxyuridine 5'-triphosphate nucleotidohydrolase (Agrobacterium fabrum (strain C58 / ATCC 33970) (Agrobacterium tumefaciens (strain C58))).